The primary structure comprises 480 residues: Bifunctional protein HldE (480 aa).

The segment at 1–316 (MNMHDFSKTK…EQLNASMRHQ (316 aa)) is ribokinase. Residue 192 to 195 (NQGE) participates in ATP binding. Aspartate 261 is a catalytic residue. The cytidylyltransferase stretch occupies residues 342–480 (FTNGCFDLLH…EAEIKEGAAQ (139 aa)).

This sequence in the N-terminal section; belongs to the carbohydrate kinase PfkB family. In the C-terminal section; belongs to the cytidylyltransferase family. In terms of assembly, homodimer.

It carries out the reaction D-glycero-beta-D-manno-heptose 7-phosphate + ATP = D-glycero-beta-D-manno-heptose 1,7-bisphosphate + ADP + H(+). The enzyme catalyses D-glycero-beta-D-manno-heptose 1-phosphate + ATP + H(+) = ADP-D-glycero-beta-D-manno-heptose + diphosphate. It functions in the pathway nucleotide-sugar biosynthesis; ADP-L-glycero-beta-D-manno-heptose biosynthesis; ADP-L-glycero-beta-D-manno-heptose from D-glycero-beta-D-manno-heptose 7-phosphate: step 1/4. The protein operates within nucleotide-sugar biosynthesis; ADP-L-glycero-beta-D-manno-heptose biosynthesis; ADP-L-glycero-beta-D-manno-heptose from D-glycero-beta-D-manno-heptose 7-phosphate: step 3/4. Functionally, catalyzes the phosphorylation of D-glycero-D-manno-heptose 7-phosphate at the C-1 position to selectively form D-glycero-beta-D-manno-heptose-1,7-bisphosphate. Catalyzes the ADP transfer from ATP to D-glycero-beta-D-manno-heptose 1-phosphate, yielding ADP-D-glycero-beta-D-manno-heptose. In Hydrogenovibrio crunogenus (strain DSM 25203 / XCL-2) (Thiomicrospira crunogena), this protein is Bifunctional protein HldE.